The chain runs to 338 residues: Formamidase (338 aa).

The 247-residue stretch at 14-260 (LLIAAIQYPV…WEIVTAELFP (247 aa)) folds into the CN hydrolase domain. E60 (proton acceptor) is an active-site residue. K133 functions as the Proton donor in the catalytic mechanism. Residue C166 is the Nucleophile of the active site.

It belongs to the carbon-nitrogen hydrolase superfamily. Aliphatic amidase family.

The enzyme catalyses formamide + H2O = formate + NH4(+). In terms of biological role, is an aliphatic amidase with a restricted substrate specificity, as it only hydrolyzes formamide. This Photorhabdus laumondii subsp. laumondii (strain DSM 15139 / CIP 105565 / TT01) (Photorhabdus luminescens subsp. laumondii) protein is Formamidase.